Consider the following 117-residue polypeptide: Large ribosomal subunit protein bL19 (117 aa).

It belongs to the bacterial ribosomal protein bL19 family.

Functionally, this protein is located at the 30S-50S ribosomal subunit interface and may play a role in the structure and function of the aminoacyl-tRNA binding site. This chain is Large ribosomal subunit protein bL19, found in Rhodopirellula baltica (strain DSM 10527 / NCIMB 13988 / SH1).